The primary structure comprises 355 residues: Serum paraoxonase/arylesterase 1 (355 aa).

C42 and C353 are joined by a disulfide. Ca(2+)-binding residues include E53 and D54. H115 (proton acceptor) is an active-site residue. Ca(2+) contacts are provided by I117, N168, D169, and N224. The N-linked (GlcNAc...) asparagine glycan is linked to N253. Residues D269 and N270 each contribute to the Ca(2+) site. N-linked (GlcNAc...) asparagine glycans are attached at residues N270 and N324.

The protein belongs to the paraoxonase family. Homodimer. Heterooligomer with phosphate-binding protein (HPBP). Interacts with CLU. Ca(2+) is required as a cofactor. Post-translationally, glycosylated. In terms of processing, the signal sequence is not cleaved. Present in two forms, form B contains a disulfide bond, form A does not. Plasma, associated with HDL (at protein level). Expressed in liver, but not in heart, brain, placenta, lung, skeletal muscle, kidney or pancreas.

The protein localises to the secreted. It is found in the extracellular space. The enzyme catalyses a phenyl acetate + H2O = a phenol + acetate + H(+). It carries out the reaction An aryl dialkyl phosphate + H2O = dialkyl phosphate + an aryl alcohol.. The catalysed reaction is an N-acyl-L-homoserine lactone + H2O = an N-acyl-L-homoserine + H(+). Hydrolyzes the toxic metabolites of a variety of organophosphorus insecticides. Capable of hydrolyzing a broad spectrum of organophosphate substrates and lactones, and a number of aromatic carboxylic acid esters. Mediates an enzymatic protection of low density lipoproteins against oxidative modification and the consequent series of events leading to atheroma formation. The chain is Serum paraoxonase/arylesterase 1 (PON1) from Homo sapiens (Human).